The primary structure comprises 798 residues: MAEAHQASSLLSSLSSDGAEVELSSPVWQEIYLCALRSWKRHLWRVWNDFLAGVVPATPLSWLFLFSTIQLACLLQLDPSLGLMEKIKELLPDWGGQHHQLQGFLSAAVFASCLWGALIFTLHVALRLLLSHHGWLLEPHGAMSSPTKTWLALVRIFSGRHPRLFSFQRALPRQPVPSAQETVRKYLESVRPVLGDDAFDRATALANDFLRLHAPRLQLYLQLKSWCTSNYVSDWWEEFVYLRSRGSLINSTYYMMDFLYVTPTPLQAARAGNAVHTLLLYRHLLNRQEISPTLLMGMRPLCSAQYERMFNTTRIPGVEKDHLRHLQDSRHVAVFHRGRFFRVGTHSPNGLLSPRALEQQFQDILDDPSPACPLEEHLAALTAAPRSMWAQVRESVKTHAATALEAVEGAAFFVSLDSEPAGLTREDPAASLDAYAHALLAGRGHDRWFDKSFTLIVFSNGKLGLSVEHSWADCPVSGHLWEFTLATECFQLGYATDGHCKGHPDPTLPQPQRLQWDLPEQIQPSISLALRGAKTLSGNIDCHVFPFSHFGKSFIKCCHVSSDSFIQLVLQLAHFRDRGQFCLTYESAMTRLFLEGRTETVRSCTREACQFVRAMDNKETDQHCLALFRVAVDKHQALLKAAMSGQGIDRHLFALYIMSRLLHMQSPFLTQVQSQQWLLSTSQVPVQQTHLIDVHNYPDYVSSGGGFGPAHDHGYGISYIFMGENAITFHISSKKSSTETDSHRLGQHIENALLDVASLFRVGQHFKRQFRGENSDYRYNFLSCKTVDPNTPTSSTNL.

Residues 1–52 (MAEAHQASSLLSSLSSDGAEVELSSPVWQEIYLCALRSWKRHLWRVWNDFLA) lie on the Cytoplasmic side of the membrane. Residues 53–75 (GVVPATPLSWLFLFSTIQLACLL) form a helical membrane-spanning segment. Over 76-103 (QLDPSLGLMEKIKELLPDWGGQHHQLQG) the chain is Lumenal. The chain crosses the membrane as a helical span at residues 104 to 126 (FLSAAVFASCLWGALIFTLHVAL). The Cytoplasmic portion of the chain corresponds to 127 to 798 (RLLLSHHGWL…PNTPTSSTNL (672 aa)). His469 serves as the catalytic Proton acceptor. CoA is bound at residue 551–563 (GKSFIKCCHVSSD). Tyr585, Ser587, and Thr598 together coordinate (R)-carnitine. The required for interaction with GRIA1 stretch occupies residues 759–798 (LFRVGQHFKRQFRGENSDYRYNFLSCKTVDPNTPTSSTNL).

Belongs to the carnitine/choline acetyltransferase family. As to quaternary structure, peripherally associated with AMPAR complex. AMPAR complex consists of an inner core made of 4 pore-forming GluA/GRIA proteins (GRIA1, GRIA2, GRIA3 and GRIA4) and 4 major auxiliary subunits arranged in a twofold symmetry. One of the two pairs of distinct binding sites is occupied either by CNIH2, CNIH3 or CACNG2, CACNG3. The other harbors CACNG2, CACNG3, CACNG4, CACNG8 or GSG1L. This inner core of AMPAR complex is complemented by outer core constituents binding directly to the GluA/GRIA proteins at sites distinct from the interaction sites of the inner core constituents. Outer core constituents include at least PRRT1, PRRT2, CKAMP44/SHISA9, FRRS1L and NRN1. The proteins of the inner and outer core serve as a platform for other, more peripherally associated AMPAR constituents, including CPT1C. Alone or in combination, these auxiliary subunits control the gating and pharmacology of the AMPAR complex and profoundly impact their biogenesis and protein processing. Interacts with SACM1L; the interaction regulates SACM1L phosphatidylinositol-3-phosphatase activity and translocation to endoplasmic reticulum/trans Golgi network in a malonyl-CoA dependent manner. Interacts with ATL1. Predominantly expressed in brain (at protein level) and testis, highly expressed in the hippocampus, amygdala and cerebellum. Expressed in neurons but not astrocytes. Expressed in the ventral horn from spinal cords.

Its subcellular location is the synapse. The protein resides in the cell projection. It localises to the axon. The protein localises to the dendrite. It is found in the dendritic spine. Its subcellular location is the endoplasmic reticulum membrane. It catalyses the reaction S-hexadecanoyl-L-cysteinyl-[protein] + H2O = L-cysteinyl-[protein] + hexadecanoate + H(+). In terms of biological role, palmitoyl thioesterase specifically expressed in the endoplasmic reticulum of neurons. Modulates the trafficking of the glutamate receptor, AMPAR, to plasma membrane through depalmitoylation of GRIA1. Also regulates AMPR trafficking through the regulation of SACM1L phosphatidylinositol-3-phosphatase activity by interaction in a malonyl-CoA dependent manner. Binds malonyl-CoA and couples malonyl-CoA to ceramide levels, necessary for proper spine maturation and contributing to systemic energy homeostasis and appetite control. Binds to palmitoyl-CoA, but does not have carnitine palmitoyltransferase 1 catalytic activity or at very low levels. The chain is Palmitoyl thioesterase CPT1C (Cpt1c) from Mus musculus (Mouse).